The sequence spans 339 residues: GDP-fucose transporter 1 (339 aa).

Transmembrane regions (helical) follow at residues 9 to 29, 45 to 65, 82 to 102, 111 to 133, 136 to 156, 165 to 185, 209 to 229, and 237 to 257; these read SVRIAAVVAAYWTISISLVFL, LFVTWYQCVVTVICLFFLSLL, LSVAKQVLPLSAVFVGMITFN, VSFYNVGRSLTTVFNVICTYVIL, STSYKAVICCAVIIGGFLMGV, ISYSGVLFGVLASLCVSLNAI, ACFLFLPLMALLGEIGEVAHF, and FWLMMTIGGVFGIAIGYITGL. Positions 319–339 are disordered; it reads AHTIQASKDDKALQEDGQTKV. The segment covering 325–339 has biased composition (basic and acidic residues); that stretch reads SKDDKALQEDGQTKV.

The protein belongs to the TPT transporter family. SLC35C subfamily.

The protein localises to the golgi apparatus membrane. The enzyme catalyses GMP(out) + GDP-beta-L-fucose(in) = GMP(in) + GDP-beta-L-fucose(out). Its function is as follows. Antiporter specific for GDP-l-fucose and depending on the concomitant reverse transport of GMP. Involved in GDP-fucose import from the cytoplasm into the Golgi lumen. This is GDP-fucose transporter 1 (slc35c1) from Nematostella vectensis (Starlet sea anemone).